The chain runs to 185 residues: uncharacterized protein (185 aa).

It belongs to the PIGL family.

This is an uncharacterized protein from Escherichia coli (strain K12).